Consider the following 141-residue polypeptide: Large ribosomal subunit protein uL11c (141 aa).

This sequence belongs to the universal ribosomal protein uL11 family. As to quaternary structure, part of the ribosomal stalk of the 50S ribosomal subunit. Interacts with L10 and the large rRNA to form the base of the stalk. L10 forms an elongated spine to which L12 dimers bind in a sequential fashion forming a multimeric L10(L12)X complex.

It localises to the plastid. It is found in the chloroplast. In terms of biological role, forms part of the ribosomal stalk which helps the ribosome interact with GTP-bound translation factors. This chain is Large ribosomal subunit protein uL11c, found in Cyanidium caldarium (Red alga).